A 284-amino-acid chain; its full sequence is 4-hydroxybenzoate octaprenyltransferase (284 aa).

The next 7 membrane-spanning stretches (helical) occupy residues 33–53 (VIAAQGMPSWNVLIVFVLGVF), 93–113 (IGLFLVLGISSFLLVLTMNPL), 136–156 (YLPQLFLGLAFSWAIPMAWAA), 159–179 (GELPWIVWFVFVINALWTIAY), 209–229 (LVIGVLQLVTLAMLVLLGQHY), 231–248 (LGQSYYWTILVAASLFVY), and 264–284 (AFLNNNYVGIVIVIGLLIAFW).

The protein belongs to the UbiA prenyltransferase family. Mg(2+) is required as a cofactor.

Its subcellular location is the cell inner membrane. The enzyme catalyses all-trans-octaprenyl diphosphate + 4-hydroxybenzoate = 4-hydroxy-3-(all-trans-octaprenyl)benzoate + diphosphate. The protein operates within cofactor biosynthesis; ubiquinone biosynthesis. Functionally, catalyzes the prenylation of para-hydroxybenzoate (PHB) with an all-trans polyprenyl group. Mediates the second step in the final reaction sequence of ubiquinone-8 (UQ-8) biosynthesis, which is the condensation of the polyisoprenoid side chain with PHB, generating the first membrane-bound Q intermediate 3-octaprenyl-4-hydroxybenzoate. This is 4-hydroxybenzoate octaprenyltransferase from Vibrio campbellii (strain ATCC BAA-1116).